The primary structure comprises 461 residues: Phosphatidate cytidylyltransferase 1 (461 aa).

A disordered region spans residues 1–68; sequence MLELRHRGGC…PEVPPSSDRT (68 aa). Residue R7 is modified to Omega-N-methylarginine. Over residues 22–56 the composition is skewed to basic and acidic residues; that stretch reads REGEAAGGDHETESTSDKETDIDDRYGDLDARGDS. A phosphoserine mark is found at S35 and S37. The next 6 helical transmembrane spans lie at 96 to 116, 149 to 169, 183 to 203, 230 to 250, 279 to 299, and 357 to 377; these read MISL…LLVL, FLLC…FATF, HRFI…LSLV, LVIQ…SSVI, GFIG…YVLS, and IALS…ASGF.

It belongs to the CDS family. As to quaternary structure, homodimer. Interacts with FOS; this interaction may enhance catalytic activity. Mg(2+) is required as a cofactor. In terms of tissue distribution, brain, retina and testis. Found in cerebellar Purkinje cells, pineal body, inner segment of photoreceptor cells and postmitotic spermatocytes and spermatids.

It is found in the endoplasmic reticulum membrane. The enzyme catalyses a 1,2-diacyl-sn-glycero-3-phosphate + CTP + H(+) = a CDP-1,2-diacyl-sn-glycerol + diphosphate. It carries out the reaction 1-octadecanoyl-2-(5Z,8Z,11Z,14Z-eicosatetraenoyl)-sn-glycero-3-phosphate + CTP + H(+) = 1-octadecanoyl-2-(5Z,8Z,11Z,14Z-eicosatetraenoyl)-sn-glycero-3-cytidine-5'-diphosphate + diphosphate. It catalyses the reaction 1-octadecanoyl-2-(9Z,12Z-octadecadienoyl)-sn-glycero-3-phosphate + CTP + H(+) = 1-octadecanoyl-2-(9Z,12Z-octadecadienoyl)-sn-glycero-3-cytidine-5'-diphosphate + diphosphate. The catalysed reaction is 1-hexadecanoyl-2-(5Z,8Z,11Z,14Z-eicosatetraenoyl)-sn-glycero-3-phosphate + CTP + H(+) = 1-hexadecanoyl-2-(5Z,8Z,11Z,14Z-eicosatetraenoyl)-sn-glycero-3-cytidine-5'-diphosphate + diphosphate. The enzyme catalyses 1,2-di-(5Z,8Z,11Z,14Z)-eicosatetraenoyl-sn-glycero-3-phosphate + CTP + H(+) = 1,2-di-(5Z,8Z,11Z,14Z-eicosatetraenoyl)-sn-glycero-3-cytidine-5'-diphosphate + diphosphate. It carries out the reaction 1-octadecanoyl-2-(9Z-octadecenoyl)-sn-glycero-3-phosphate + CTP + H(+) = 1-octadecanoyl-2-(9Z-octadecenoyl)-sn-glycero-3-cytidine-5'-diphosphate + diphosphate. It catalyses the reaction 1-octadecanoyl-2-(4Z,7Z,10Z,13Z,16Z,19Z-docosahexaenoyl)-sn-glycero-3-phosphate + CTP + H(+) = 1-octadecanoyl-2-(4Z,7Z,10Z,13Z,16Z,19Z-docosahexaenoyl)-sn-glycero-3-cytidine-5'-diphosphate + diphosphate. The catalysed reaction is 1,2-di-(9Z,12Z-octadecadienoyl)-sn-glycero-3-phosphate + CTP + H(+) = 1,2-di-(9Z,12Z-octadecadienoyl)-sn-glycero-3-cytidine-5'-diphosphate + diphosphate. The enzyme catalyses 1,2-di-(9Z-octadecenoyl)-sn-glycero-3-phosphate + CTP + H(+) = 1,2-di-(9Z-octadecenoyl)-sn-glycero-3-cytidine-5'-diphosphate + diphosphate. Its pathway is phospholipid metabolism; CDP-diacylglycerol biosynthesis; CDP-diacylglycerol from sn-glycerol 3-phosphate: step 3/3. With respect to regulation, activated by GTP. Inhibited by CDP-diacylglycerol and by phosphatidylglycerol 4,5-bisphosphate (PPI2). Catalyzes the conversion of phosphatidic acid (PA) to CDP-diacylglycerol (CDP-DAG), an essential intermediate in the synthesis of phosphatidylglycerol, cardiolipin and phosphatidylinositol. Exhibits almost no acyl chain preference for PA, showing no discrimination for the sn-1/sn-2 acyl chain composition of PAs. Plays an important role in regulatinng the growth of lipid droplets which are storage organelles at the center of lipid and energy homeostasis. Positively regulates the differentiation and development of adipocytes. The sequence is that of Phosphatidate cytidylyltransferase 1 from Rattus norvegicus (Rat).